A 107-amino-acid chain; its full sequence is DNA polymerase delta subunit 4 (107 aa).

The PCNA-interaction protein motif (PIP box) motif lies at Met-1–Lys-16. Residues Met-1–Ser-40 are disordered. A compositionally biased stretch (basic and acidic residues) spans Lys-15–Leu-28.

Belongs to the DNA polymerase delta subunit 4 family. As to quaternary structure, component of the tetrameric DNA polymerase delta complex (Pol-delta4), which consists of POLD1/p125, POLD2/p50, POLD3/p66/p68 and POLD4/p12, with POLD1 bearing DNA polymerase and 3' to 5' proofreading exonuclease activities. Within this complex, directly interacts with POLD1 and POLD2. Directly interacts with PCNA, as do POLD1 and POLD3; this interaction stimulates Pol-delta4 polymerase activity. As POLD1 and POLD2, directly interacts with WRNIP1; this interaction stimulates DNA polymerase delta-mediated DNA synthesis, independently of the presence of PCNA, possibly by increasing initiation frequency. Upon genotoxic stress induced by DNA damaging agents or by replication stress, POLD4 is proteolytically degraded and Pol-delta4 is converted into a trimeric form of the complex (Pol-delta3) that has an increased proofreading activity. The DNA polymerase delta complex interacts with POLDIP2; this interaction is probably mediated through direct binding to POLD2. In terms of processing, ubiquitinated; undergoes 'Lys-48'-linked polyubiquitination in response to UV irradiation or treatment with an alkylating agent, leading to proteasomal degradation. This modification is mediated, at least in part, by RNF8. Post-translationally, ubiquitinated; undergoes 'Lys-48'-linked ubiquitination in response to UV irradiation, leading to proteasomal degradation. This modification is partly mediated by RNF8 and by the DCX(DTL) E3 ubiquitin ligase complex (also called CRL4(CDT2)). Efficient degradation requires the presence of PCNA and is required for the inhibition of fork progression after DNA damage.

It is found in the nucleus. Functionally, as a component of the tetrameric DNA polymerase delta complex (Pol-delta4), plays a role in high fidelity genome replication and repair. Within this complex, increases the rate of DNA synthesis and decreases fidelity by regulating POLD1 polymerase and proofreading 3' to 5' exonuclease activity. Pol-delta4 participates in Okazaki fragment processing, through both the short flap pathway, as well as a nick translation system. Under conditions of DNA replication stress, required for the repair of broken replication forks through break-induced replication (BIR), a mechanism that may induce segmental genomic duplications of up to 200 kb. Involved in Pol-delta4 translesion synthesis (TLS) of templates carrying O6-methylguanine or abasic sites. Its degradation in response to DNA damage is required for the inhibition of fork progression and cell survival. The chain is DNA polymerase delta subunit 4 (Pold4) from Mus musculus (Mouse).